Consider the following 206-residue polypeptide: RILP-like protein 2 (206 aa).

A disordered region spans residues 1 to 29 (MEEPPLREEEEEEEEDEAGPEGALGKSPL). The segment covering 8-19 (EEEEEEEEDEAG) has biased composition (acidic residues). Positions 19 to 108 (GPEGALGKSP…RREGSAAGPE (90 aa)) constitute an RH1 domain. Positions 67–159 (LEMLETLVNE…VQEELQCYKS (93 aa)) form a coiled coil. Residues 125–197 (RPRFTLQELR…KEEKTIIRKL (73 aa)) form the RH2 domain. Residues 161–189 (LIPPREGPGGRREKEALFPRGSNANSNKE) form a disordered region. Positions 168–177 (PGGRREKEAL) are enriched in basic and acidic residues.

This sequence belongs to the RILPL family. As to quaternary structure, homodimer. Interacts with RAC1. Interacts (via N-terminus) with MYO5A, the interaction is required for its role in dendrite formation. Interacts with RAB8A; interaction is dependent on the phosphorylation of RAB8A on 'Thr-72'. Interacts with RAB10 and RAB12; interaction is dependent on the phosphorylation of 'Thr-73' on RAB10 and 'Ser-105' on RAB12.

It is found in the cytoplasm. The protein resides in the cytosol. Its subcellular location is the cytoskeleton. The protein localises to the microtubule organizing center. It localises to the centrosome. It is found in the cell projection. The protein resides in the cilium. In terms of biological role, involved in cell shape and neuronal morphogenesis, positively regulating the establishment and maintenance of dendritic spines. Plays a role in cellular protein transport, including protein transport away from primary cilia. May function via activation of RAC1 and PAK1. The chain is RILP-like protein 2 (RILPL2) from Bos taurus (Bovine).